The chain runs to 142 residues: Hemoglobin subunit alpha (142 aa).

The Globin domain occupies 1–142 (GLTAADKTLI…VEKALFETYR (142 aa)). H59 contacts O2. H88 lines the heme b pocket.

It belongs to the globin family. In terms of assembly, heterotetramer of two alpha chains and two beta chains (an easy dimerization is also reported). Red blood cells.

Involved in oxygen transport from the lung to the various peripheral tissues. This chain is Hemoglobin subunit alpha (HBA), found in Latimeria chalumnae (Coelacanth).